Here is a 206-residue protein sequence, read N- to C-terminus: Ribosomal RNA large subunit methyltransferase E (206 aa).

5 residues coordinate S-adenosyl-L-methionine: Gly-61, Trp-63, Asp-81, Asp-97, and Asp-122. Lys-162 acts as the Proton acceptor in catalysis.

Belongs to the class I-like SAM-binding methyltransferase superfamily. RNA methyltransferase RlmE family.

It localises to the cytoplasm. It catalyses the reaction uridine(2552) in 23S rRNA + S-adenosyl-L-methionine = 2'-O-methyluridine(2552) in 23S rRNA + S-adenosyl-L-homocysteine + H(+). Specifically methylates the uridine in position 2552 of 23S rRNA at the 2'-O position of the ribose in the fully assembled 50S ribosomal subunit. This Neisseria gonorrhoeae (strain ATCC 700825 / FA 1090) protein is Ribosomal RNA large subunit methyltransferase E.